Here is a 202-residue protein sequence, read N- to C-terminus: Endothelin-1 (202 aa).

The signal sequence occupies residues 1–25; that stretch reads MDYFPMIFALLFVAFQGAPEAAVLG. Positions 26-50 are excised as a propeptide; it reads TELSTGAESGGERPVPTTPWRPRRS. The tract at residues 29–48 is disordered; sequence STGAESGGERPVPTTPWRPR. 2 disulfides stabilise this stretch: Cys-53-Cys-67 and Cys-55-Cys-63. Positions 74–202 are excised as a propeptide; it reads VNTPEHVVPY…DKKVIYSRAH (129 aa). The endothelin-like stretch occupies residues 110–124; it reads CQCASQTDKKCQNFC.

The protein belongs to the endothelin/sarafotoxin family.

The protein resides in the secreted. Endothelins are endothelium-derived vasoconstrictor peptides. Probable ligand for G-protein coupled receptors EDNRA and EDNRB which activates PTK2B, BCAR1, BCAR3 and, GTPases RAP1 and RHOA cascade in glomerular mesangial cells. Also binds the DEAR/FBXW7-AS1 receptor. Promotes mesenteric arterial wall remodeling via activation of ROCK signaling and subsequent colocalization of NFATC3 with F-actin filaments. NFATC3 then translocates to the nucleus where it subsequently promotes the transcription of the smooth muscle hypertrophy and differentiation marker ACTA2. This Ovis aries (Sheep) protein is Endothelin-1 (EDN1).